A 345-amino-acid chain; its full sequence is Phosphoribosylformylglycinamidine cyclo-ligase (345 aa).

This sequence belongs to the AIR synthase family.

It is found in the cytoplasm. It carries out the reaction 2-formamido-N(1)-(5-O-phospho-beta-D-ribosyl)acetamidine + ATP = 5-amino-1-(5-phospho-beta-D-ribosyl)imidazole + ADP + phosphate + H(+). The protein operates within purine metabolism; IMP biosynthesis via de novo pathway; 5-amino-1-(5-phospho-D-ribosyl)imidazole from N(2)-formyl-N(1)-(5-phospho-D-ribosyl)glycinamide: step 2/2. This Bifidobacterium longum subsp. infantis (strain ATCC 15697 / DSM 20088 / JCM 1222 / NCTC 11817 / S12) protein is Phosphoribosylformylglycinamidine cyclo-ligase.